The chain runs to 586 residues: Zinc finger protein Eos (586 aa).

Disordered stretches follow at residues 1 to 42 (MHTP…APDF) and 68 to 98 (EKEF…SANS). A compositionally biased stretch (basic and acidic residues) spans 25–34 (QGKDNLEREL). A compositionally biased stretch (polar residues) spans 79 to 98 (SVSTPNSQHSSPSRSLSANS). Residue K100 forms a Glycyl lysine isopeptide (Lys-Gly) (interchain with G-Cter in SUMO2) linkage. S105 carries the post-translational modification Phosphoserine. C2H2-type zinc fingers lie at residues 159-181 (LKCD…KRSH), 187-209 (FHCN…IKLH), 215-237 (FKCP…LRTH), and 248-271 (YKCN…ERCH). An interaction with FOXP3 region spans residues 281-586 (AQALTGQPGD…HIVRGEHKVG (306 aa)). K335 is subject to N6-acetyllysine. Residues 413–490 (RLELPGSREA…QPPPTIVVGR (78 aa)) are disordered. Positions 423-433 (GEGPEDLGDGG) match the CTBP-binding motif PEDLG motif. Residues 476–485 (QGPPPQPPPT) are compositionally biased toward pro residues. A Glycyl lysine isopeptide (Lys-Gly) (interchain with G-Cter in SUMO2) cross-link involves residue K501. 2 consecutive C2H2-type zinc fingers follow at residues 531 to 553 (FKCE…MGCH) and 559 to 583 (FECN…RGEH).

It belongs to the Ikaros C2H2-type zinc-finger protein family. Self-associates. Interacts with other family members; IKZF1, IKZF2, IKZF3 and IKZF5. Interacts with CTBP2, SPI1 and MITF. Interacts with FOXP3 and CTBP1. In terms of tissue distribution, expressed mainly in the brain. Up-regulated in long term cultured astrocytes. Down-regulated during osteoclast differentiation.

The protein localises to the nucleus. In terms of biological role, DNA-binding protein that binds to the 5'GGGAATRCC-3' Ikaros-binding sequence. Interacts with SPI1 and MITF to repress transcription of the CTSK and ACP5 promoters via recruitment of corepressors SIN3A and CTBP2. May be involved in the development of central and peripheral nervous systems. Essential for the inhibitory function of regulatory T-cells (Treg). Mediates FOXP3-mediated gene silencing in regulatory T-cells (Treg) via recruitment of corepressor CTBP1. This chain is Zinc finger protein Eos (Ikzf4), found in Mus musculus (Mouse).